We begin with the raw amino-acid sequence, 410 residues long: Multifunctional CCA protein (410 aa).

Residues Gly-8 and Arg-11 each contribute to the ATP site. CTP-binding residues include Gly-8 and Arg-11. Mg(2+) is bound by residues Asp-21 and Asp-23. ATP is bound by residues Arg-91, Arg-137, and Arg-140. Residues Arg-91, Arg-137, and Arg-140 each coordinate CTP. The HD domain maps to 228–329; it reads TGVHVLSVLQ…LELLQSFDVY (102 aa).

The protein belongs to the tRNA nucleotidyltransferase/poly(A) polymerase family. Bacterial CCA-adding enzyme type 1 subfamily. Monomer. Can also form homodimers and oligomers. The cofactor is Mg(2+). Ni(2+) is required as a cofactor.

The enzyme catalyses a tRNA precursor + 2 CTP + ATP = a tRNA with a 3' CCA end + 3 diphosphate. It catalyses the reaction a tRNA with a 3' CCA end + 2 CTP + ATP = a tRNA with a 3' CCACCA end + 3 diphosphate. Its function is as follows. Catalyzes the addition and repair of the essential 3'-terminal CCA sequence in tRNAs without using a nucleic acid template. Adds these three nucleotides in the order of C, C, and A to the tRNA nucleotide-73, using CTP and ATP as substrates and producing inorganic pyrophosphate. tRNA 3'-terminal CCA addition is required both for tRNA processing and repair. Also involved in tRNA surveillance by mediating tandem CCA addition to generate a CCACCA at the 3' terminus of unstable tRNAs. While stable tRNAs receive only 3'-terminal CCA, unstable tRNAs are marked with CCACCA and rapidly degraded. The sequence is that of Multifunctional CCA protein from Pseudomonas aeruginosa (strain ATCC 15692 / DSM 22644 / CIP 104116 / JCM 14847 / LMG 12228 / 1C / PRS 101 / PAO1).